A 147-amino-acid polypeptide reads, in one-letter code: Hemoglobin subunit epsilon (147 aa).

Positions 3–147 (HLTAEEKAAI…VAIALGHKYH (145 aa)) constitute a Globin domain. Phosphoserine occurs at positions 14 and 51. 2 residues coordinate heme b: His-64 and His-93.

It belongs to the globin family. Heterotetramer of two alpha chains and two epsilon chains in early embryonic hemoglobin Gower-2; two zeta chains and two epsilon chains in early embryonic hemoglobin Gower-1. In terms of tissue distribution, red blood cells.

Its function is as follows. The epsilon chain is a beta-type chain of early mammalian embryonic hemoglobin. In Ateles belzebuth (White-bellied spider monkey), this protein is Hemoglobin subunit epsilon (HBE1).